The sequence spans 887 residues: DNA gyrase subunit A (887 aa).

One can recognise a Topo IIA-type catalytic domain in the interval 35 to 501 (LPDVRDGLKP…GFEDLEDEDL (467 aa)). Tyr-123 serves as the catalytic O-(5'-phospho-DNA)-tyrosine intermediate. The GyrA-box signature appears at 528 to 534 (QNRGGRG). A disordered region spans residues 811–865 (KEDAEDETNEDEQSTSTVSEDGTEQQREAVVNDETPGNAIHTEVIDSEENDEDGR). A compositionally biased stretch (acidic residues) spans 813–823 (DAEDETNEDEQ).

It belongs to the type II topoisomerase GyrA/ParC subunit family. As to quaternary structure, heterotetramer, composed of two GyrA and two GyrB chains. In the heterotetramer, GyrA contains the active site tyrosine that forms a transient covalent intermediate with DNA, while GyrB binds cofactors and catalyzes ATP hydrolysis.

Its subcellular location is the cytoplasm. It carries out the reaction ATP-dependent breakage, passage and rejoining of double-stranded DNA.. In terms of biological role, a type II topoisomerase that negatively supercoils closed circular double-stranded (ds) DNA in an ATP-dependent manner to modulate DNA topology and maintain chromosomes in an underwound state. Negative supercoiling favors strand separation, and DNA replication, transcription, recombination and repair, all of which involve strand separation. Also able to catalyze the interconversion of other topological isomers of dsDNA rings, including catenanes and knotted rings. Type II topoisomerases break and join 2 DNA strands simultaneously in an ATP-dependent manner. This Staphylococcus aureus (strain MSSA476) protein is DNA gyrase subunit A.